We begin with the raw amino-acid sequence, 433 residues long: Dihydrolipoyllysine-residue acetyltransferase component of pyruvate dehydrogenase complex (433 aa).

A Lipoyl-binding domain is found at 2 to 77 (AFEFRLPDIG…VVGDVIVKID (76 aa)). Lys43 is subject to N6-lipoyllysine. Disordered regions lie at residues 80-134 (DAEE…PSVR) and 164-204 (YLNG…FPET). 2 stretches are compositionally biased toward basic and acidic residues: residues 84–103 (MQFK…KEQE) and 117–126 (EKTEVDESKT). In terms of domain architecture, Peripheral subunit-binding (PSBD) spans 128-165 (KAMPSVRKYARENGVNIKAVNGSGKNGRITKEDIDAYL). Residues 166-188 (NGGSSEEGSNTSVASESTSSDVV) are compositionally biased toward low complexity. His404 is a catalytic residue.

It belongs to the 2-oxoacid dehydrogenase family. As to quaternary structure, forms a 24-polypeptide structural core with octahedral symmetry. (R)-lipoate serves as cofactor.

It carries out the reaction N(6)-[(R)-dihydrolipoyl]-L-lysyl-[protein] + acetyl-CoA = N(6)-[(R)-S(8)-acetyldihydrolipoyl]-L-lysyl-[protein] + CoA. In terms of biological role, the pyruvate dehydrogenase complex catalyzes the overall conversion of pyruvate to acetyl-CoA and CO(2). It contains multiple copies of three enzymatic components: pyruvate dehydrogenase (E1), dihydrolipoamide acetyltransferase (E2) and lipoamide dehydrogenase (E3). In Staphylococcus epidermidis (strain ATCC 12228 / FDA PCI 1200), this protein is Dihydrolipoyllysine-residue acetyltransferase component of pyruvate dehydrogenase complex (pdhC).